The following is a 319-amino-acid chain: Coproporphyrin III ferrochelatase 2 (319 aa).

Fe-coproporphyrin III is bound by residues Tyr13, Arg30, 46-47 (RY), Ser54, and Tyr125. Positions 181 and 262 each coordinate Fe(2+).

Belongs to the ferrochelatase family.

Its subcellular location is the cytoplasm. The enzyme catalyses Fe-coproporphyrin III + 2 H(+) = coproporphyrin III + Fe(2+). It participates in porphyrin-containing compound metabolism; protoheme biosynthesis. Involved in coproporphyrin-dependent heme b biosynthesis. Catalyzes the insertion of ferrous iron into coproporphyrin III to form Fe-coproporphyrin III. The protein is Coproporphyrin III ferrochelatase 2 of Bacillus cereus (strain ATCC 14579 / DSM 31 / CCUG 7414 / JCM 2152 / NBRC 15305 / NCIMB 9373 / NCTC 2599 / NRRL B-3711).